A 20-amino-acid polypeptide reads, in one-letter code: Hemocyanin subunit 6 (20 aa).

This sequence belongs to the tyrosinase family. Hemocyanin subfamily. Hemolymph.

The protein resides in the secreted. It localises to the extracellular space. Its function is as follows. Hemocyanins are copper-containing oxygen carriers occurring freely dissolved in the hemolymph of many mollusks and arthropods. The sequence is that of Hemocyanin subunit 6 from Homarus americanus (American lobster).